Here is a 197-residue protein sequence, read N- to C-terminus: Ras-like protein rasB (197 aa).

13-20 (GGGGVGKS) lines the GTP pocket. Positions 35–43 (YDPTIEDSY) match the Effector region motif. Residues 60 to 64 (DTAGQ) and 119 to 122 (NKCD) contribute to the GTP site. Cysteine 194 carries the post-translational modification Cysteine methyl ester. Cysteine 194 is lipidated: S-geranylgeranyl cysteine. Positions 195–197 (LIL) are cleaved as a propeptide — removed in mature form.

It belongs to the small GTPase superfamily. Ras family.

Its subcellular location is the cell membrane. It carries out the reaction GTP + H2O = GDP + phosphate + H(+). Alternates between an inactive form bound to GDP and an active form bound to GTP. Activated by a guanine nucleotide-exchange factor (GEF) and inactivated by a GTPase-activating protein (GAP). Ras proteins bind GDP/GTP and possess intrinsic GTPase activity. This is Ras-like protein rasB (rasB) from Dictyostelium discoideum (Social amoeba).